We begin with the raw amino-acid sequence, 725 residues long: Threonine--tRNA ligase, cytoplasmic (725 aa).

The TGS domain maps to 80–142 (EPIQITLPDG…EGNAKLELLK (63 aa)).

It belongs to the class-II aminoacyl-tRNA synthetase family.

It is found in the cytoplasm. It carries out the reaction tRNA(Thr) + L-threonine + ATP = L-threonyl-tRNA(Thr) + AMP + diphosphate + H(+). The protein is Threonine--tRNA ligase, cytoplasmic of Caenorhabditis elegans.